The primary structure comprises 113 residues: Large ribosomal subunit protein uL22 (113 aa).

Belongs to the universal ribosomal protein uL22 family. As to quaternary structure, part of the 50S ribosomal subunit.

This protein binds specifically to 23S rRNA; its binding is stimulated by other ribosomal proteins, e.g. L4, L17, and L20. It is important during the early stages of 50S assembly. It makes multiple contacts with different domains of the 23S rRNA in the assembled 50S subunit and ribosome. In terms of biological role, the globular domain of the protein is located near the polypeptide exit tunnel on the outside of the subunit, while an extended beta-hairpin is found that lines the wall of the exit tunnel in the center of the 70S ribosome. The sequence is that of Large ribosomal subunit protein uL22 from Bacillus cytotoxicus (strain DSM 22905 / CIP 110041 / 391-98 / NVH 391-98).